Reading from the N-terminus, the 267-residue chain is Tryptophan synthase alpha chain (267 aa).

Catalysis depends on proton acceptor residues Glu-47 and Asp-58.

It belongs to the TrpA family. As to quaternary structure, tetramer of two alpha and two beta chains.

It carries out the reaction (1S,2R)-1-C-(indol-3-yl)glycerol 3-phosphate + L-serine = D-glyceraldehyde 3-phosphate + L-tryptophan + H2O. It participates in amino-acid biosynthesis; L-tryptophan biosynthesis; L-tryptophan from chorismate: step 5/5. The alpha subunit is responsible for the aldol cleavage of indoleglycerol phosphate to indole and glyceraldehyde 3-phosphate. This is Tryptophan synthase alpha chain from Chlorobaculum tepidum (strain ATCC 49652 / DSM 12025 / NBRC 103806 / TLS) (Chlorobium tepidum).